A 180-amino-acid chain; its full sequence is Ribulose bisphosphate carboxylase small subunit, chloroplastic 2 (180 aa).

The transit peptide at 1-56 (MASMISSSAVTTVSRASRGQSAAVAPFGGLKSMTGFPVKKVNTDITSITSNGGRVK) directs the protein to the chloroplast.

Belongs to the RuBisCO small chain family. As to quaternary structure, heterohexadecamer of 8 large and 8 small subunits.

It is found in the plastid. Its subcellular location is the chloroplast. Its function is as follows. RuBisCO catalyzes two reactions: the carboxylation of D-ribulose 1,5-bisphosphate, the primary event in carbon dioxide fixation, as well as the oxidative fragmentation of the pentose substrate. Both reactions occur simultaneously and in competition at the same active site. Although the small subunit is not catalytic it is essential for maximal activity. In Pisum sativum (Garden pea), this protein is Ribulose bisphosphate carboxylase small subunit, chloroplastic 2.